The chain runs to 737 residues: SANT and BTB domain regulator of class switch recombination (737 aa).

An SANT domain is found at 21-59 (DMILYPLIGIPQTINWETVARLVPGLTPKECVKRFDELK). Positions 147-255 (MVIHVCDEAK…QCIQYCHKNM (109 aa)) constitute a BTB domain. Positions 555 to 576 (SEEEEYTTGSEVTEDEVGDEEE) are enriched in acidic residues. A disordered region spans residues 555 to 618 (SEEEEYTTGS…TLEKSTSRDV (64 aa)). The segment covering 580–595 (KQRKKEKPKKFTKPPK) has biased composition (basic residues). Basic and acidic residues predominate over residues 604 to 615 (QKKEKTLEKSTS).

Belongs to the KIAA1841 family. Homodimer. Interacts (via the BTB domain) with HDAC1 and NCOR2.

Functionally, negatively regulates class switch recombination or isotype switching in splenic B-cells. The chain is SANT and BTB domain regulator of class switch recombination from Rattus norvegicus (Rat).